The chain runs to 397 residues: Ornithine aminotransferase (397 aa).

Lys-255 is subject to N6-(pyridoxal phosphate)lysine.

It belongs to the class-III pyridoxal-phosphate-dependent aminotransferase family. OAT subfamily. It depends on pyridoxal 5'-phosphate as a cofactor.

It is found in the cytoplasm. The enzyme catalyses a 2-oxocarboxylate + L-ornithine = L-glutamate 5-semialdehyde + an L-alpha-amino acid. It functions in the pathway amino-acid biosynthesis; L-proline biosynthesis; L-glutamate 5-semialdehyde from L-ornithine: step 1/1. Functionally, catalyzes the interconversion of ornithine to glutamate semialdehyde. The protein is Ornithine aminotransferase of Macrococcus caseolyticus (strain JCSC5402) (Macrococcoides caseolyticum).